The chain runs to 516 residues: Solute carrier family 49 member A3 (516 aa).

Basic and acidic residues predominate over residues 1 to 10; that stretch reads MAGTMDRLED. The disordered stretch occupies residues 1–22; that stretch reads MAGTMDRLEDCNSPETSGTAGD. 12 consecutive transmembrane segments (helical) span residues 34-54, 74-94, 104-124, 139-159, 170-190, 199-219, 253-273, 289-309, 321-341, 344-364, 382-402, and 425-445; these read WVFL…WLSF, WLSL…IWVL, ILGA…CLPV, LCAL…ALWF, ISTM…PALV, MLGI…VCLW, VLLA…SALL, LCGA…GLYV, IGLC…QLQG, LALA…APVV, GLIF…LTAL, and VSLL…VIFF. Residues 453–516 are disordered; the sequence is EAESGGSSSP…EWAETMPRDV (64 aa). Over residues 504-516 the composition is skewed to basic and acidic residues; it reads GHSEWAETMPRDV.

This sequence belongs to the major facilitator superfamily.

The protein localises to the membrane. In Mus musculus (Mouse), this protein is Solute carrier family 49 member A3 (Slc49a3).